Consider the following 117-residue polypeptide: MAYVRLACLAVIFFFAASVMFTVEAGIPCGESCVFIPCLTTVVGCSCKNKVCYNNHVIAAEANSIDDHHLLCQSHDDCIKKGTGNFCAPFLDHACQYGWCFRAESEGYLLKDFLKMP.

The first 25 residues, 1 to 25 (MAYVRLACLAVIFFFAASVMFTVEA), serve as a signal peptide directing secretion. Residues 26–55 (GIPCGESCVFIPCLTTVVGCSCKNKVCYNN) constitute a cross-link (cyclopeptide (Gly-Asn)). Cystine bridges form between cysteine 29–cysteine 45, cysteine 33–cysteine 47, and cysteine 38–cysteine 52. Positions 56 to 117 (HVIAAEANSI…YLLKDFLKMP (62 aa)) are cleaved as a propeptide — removed in mature form.

In terms of processing, contains 3 disulfide bonds. This is a cyclic peptide. In terms of tissue distribution, expressed in seed but not in root, nodule, flower, stem, shoot, leaf and pod (at protein level).

Functionally, probably participates in a plant defense mechanism. This chain is Cliotide T9, found in Clitoria ternatea (Butterfly pea).